A 311-amino-acid polypeptide reads, in one-letter code: Putative protease MJ0651 (311 aa).

Ser128 functions as the Nucleophile in the catalytic mechanism. Catalysis depends on Lys180, which acts as the Proton donor/acceptor.

This sequence belongs to the peptidase S49 family.

The sequence is that of Putative protease MJ0651 from Methanocaldococcus jannaschii (strain ATCC 43067 / DSM 2661 / JAL-1 / JCM 10045 / NBRC 100440) (Methanococcus jannaschii).